The chain runs to 394 residues: Actin-related protein 2-A (394 aa).

Residues 160-162, 214-218, and 305-310 each bind ATP; these read GDG, RMIKE, and GGSTMY.

Belongs to the actin family. ARP2 subfamily. As to quaternary structure, component of the Arp2/3 complex composed of actr2/arp2, actr3/arp3, arpc1 (arpc1a or arpc1b), arpc2, arpc3, arpc4 and arpc5.

The protein localises to the cytoplasm. It is found in the cytoskeleton. The protein resides in the cell projection. It localises to the nucleus. Functionally, ATP-binding component of the Arp2/3 complex, a multiprotein complex that mediates actin polymerization upon stimulation by nucleation-promoting factor (NPF). The Arp2/3 complex mediates the formation of branched actin networks in the cytoplasm, providing the force for cell motility. Seems to contact the pointed end of the daughter actin filament. In addition to its role in the cytoplasmic cytoskeleton, the Arp2/3 complex also promotes actin polymerization in the nucleus, thereby regulating gene transcription and repair of damaged DNA. The Arp2/3 complex promotes homologous recombination (HR) repair in response to DNA damage by promoting nuclear actin polymerization, leading to drive motility of double-strand breaks (DSBs). The protein is Actin-related protein 2-A (actr2-a) of Xenopus laevis (African clawed frog).